The primary structure comprises 718 residues: Methionine--tRNA ligase (718 aa).

A 'HIGH' region motif is present at residues 27–37 (PYANGQIHIGH). Zn(2+) is bound by residues cysteine 158, cysteine 161, cysteine 171, and cysteine 174. A 'KMSKS' region motif is present at residues 348-352 (KMSKS). Lysine 351 is an ATP binding site. The tRNA-binding domain occupies 612-718 (DFAKIDLRIA…SGAKPGMRVK (107 aa)).

The protein belongs to the class-I aminoacyl-tRNA synthetase family. MetG type 1 subfamily. Homodimer. It depends on Zn(2+) as a cofactor.

The protein localises to the cytoplasm. It carries out the reaction tRNA(Met) + L-methionine + ATP = L-methionyl-tRNA(Met) + AMP + diphosphate. Is required not only for elongation of protein synthesis but also for the initiation of all mRNA translation through initiator tRNA(fMet) aminoacylation. This Burkholderia cenocepacia (strain ATCC BAA-245 / DSM 16553 / LMG 16656 / NCTC 13227 / J2315 / CF5610) (Burkholderia cepacia (strain J2315)) protein is Methionine--tRNA ligase.